Reading from the N-terminus, the 175-residue chain is uncharacterized protein (175 aa).

Positions 1 to 33 are cleaved as a signal peptide; sequence MERLPYEIVSTIFRKAILHYVLIRGTTYPQSLA.

This is an uncharacterized protein from Methanocaldococcus jannaschii (strain ATCC 43067 / DSM 2661 / JAL-1 / JCM 10045 / NBRC 100440) (Methanococcus jannaschii).